The chain runs to 494 residues: V-type proton ATPase subunit B (494 aa).

Residue Arg384 participates in ATP binding.

This sequence belongs to the ATPase alpha/beta chains family. In terms of assembly, V-ATPase is a heteromultimeric enzyme made up of two complexes: the ATP-hydrolytic V1 complex and the proton translocation V0 complex. The V1 complex consists of three catalytic AB heterodimers that form a heterohexamer, three peripheral stalks each consisting of EG heterodimers, one central rotor including subunits D and F, and the regulatory subunits C and H. The proton translocation complex V0 consists of the proton transport subunit a, a ring of proteolipid subunits c9c'', rotary subunit d, subunits e and f, and the accessory subunits VhaAC45 and ATP6AP2.

Non-catalytic subunit of the V1 complex of vacuolar(H+)-ATPase (V-ATPase), a multisubunit enzyme composed of a peripheral complex (V1) that hydrolyzes ATP and a membrane integral complex (V0) that translocates protons. V-ATPase is responsible for acidifying and maintaining the pH of intracellular compartments and in some cell types, is targeted to the plasma membrane, where it is responsible for acidifying the extracellular environment. Essential for the proper assembly and activity of V-ATPase. The protein is V-type proton ATPase subunit B (VHA55) of Heliothis virescens (Tobacco budworm moth).